Consider the following 268-residue polypeptide: Ubiquinone biosynthesis protein COQ4 homolog, mitochondrial (268 aa).

Zn(2+)-binding residues include histidine 171, aspartate 172, histidine 175, and glutamate 187.

Belongs to the COQ4 family. As to quaternary structure, component of a multi-subunit COQ enzyme complex. Zn(2+) serves as cofactor.

The protein resides in the mitochondrion inner membrane. The enzyme catalyses a 4-hydroxy-3-methoxy-5-(all-trans-polyprenyl)benzoate + H(+) = a 2-methoxy-6-(all-trans-polyprenyl)phenol + CO2. Its pathway is cofactor biosynthesis; ubiquinone biosynthesis. Lyase that catalyzes the C1-decarboxylation of 4-hydroxy-3-methoxy-5-(all-trans-polyprenyl)benzoic acid into 2-methoxy-6-(all-trans-polyprenyl)phenol during ubiquinone biosynthesis. This chain is Ubiquinone biosynthesis protein COQ4 homolog, mitochondrial, found in Drosophila melanogaster (Fruit fly).